The primary structure comprises 322 residues: MAPTSTFPVINMELLAGEERPAAMEQLDDACENWGFFEILNHGISTELMDEVEKMTKDHYKRVREQRFLEFASKTLKEGCDDVNKAEKLDWESTFFVRHLPESNIADIPDLDDDYRRLMKRFAAELETLAERLLDLLCENLGLEKGYLTKAFRGPAGAPTFGTKVSSYPPCPRPDLVEGLRAHTDAGGIILLFQDDRVGGLQLLKDGEWVDVPPMRHSIVVNLGDQLEVITNGRYKSVIHRVVAQTDGNRMSIASFYNPGSDAVISPAPALVKEEEAVVAYPKFVFEDYMKLYVRHKFEAKEPRFEAFKSMETETSNRIAIA.

Residues 159-259 (PTFGTKVSSY…RMSIASFYNP (101 aa)) form the Fe2OG dioxygenase domain. Fe cation is bound by residues His-183, Asp-185, and His-240.

Belongs to the iron/ascorbate-dependent oxidoreductase family. Fe cation is required as a cofactor.

It catalyses the reaction 1-aminocyclopropane-1-carboxylate + L-ascorbate + O2 = ethene + L-dehydroascorbate + hydrogen cyanide + CO2 + 2 H2O. Its pathway is alkene biosynthesis; ethylene biosynthesis via S-adenosyl-L-methionine; ethylene from S-adenosyl-L-methionine: step 2/2. The chain is 1-aminocyclopropane-1-carboxylate oxidase 1 (ACO1) from Oryza sativa subsp. japonica (Rice).